We begin with the raw amino-acid sequence, 262 residues long: Putative glycyl-radical enzyme activating enzyme HI_0520 (262 aa).

One can recognise a Radical SAM core domain in the interval 20–262 (VEGQGNRSSI…CGINKILTIL (243 aa)). [4Fe-4S] cluster-binding residues include C34, C38, and C41. Residues 40-42 (YCH), G81, and 130-132 (DLK) each bind S-adenosyl-L-methionine.

It belongs to the organic radical-activating enzymes family. The cofactor is [4Fe-4S] cluster.

The catalysed reaction is glycyl-[protein] + reduced [flavodoxin] + S-adenosyl-L-methionine = glycin-2-yl radical-[protein] + semiquinone [flavodoxin] + 5'-deoxyadenosine + L-methionine + H(+). In Haemophilus influenzae (strain ATCC 51907 / DSM 11121 / KW20 / Rd), this protein is Putative glycyl-radical enzyme activating enzyme HI_0520.